A 393-amino-acid polypeptide reads, in one-letter code: GDP-mannose:cellobiosyl-diphosphopolyprenol alpha-mannosyltransferase (393 aa).

It belongs to the glycosyltransferase group 1 family. Glycosyltransferase 4 subfamily.

The enzyme catalyses beta-D-Glc-(1-&gt;4)-alpha-D-Glc-di-trans,octa-cis-undecaprenyl diphosphate + GDP-alpha-D-mannose = alpha-D-Man-(1-&gt;3)-beta-D-Glc-(1-&gt;4)-alpha-D-Glc-1-di-trans,octa-cis-undecaprenyl diphosphate + GDP + H(+). Involved in the biosynthesis of the exopolysaccharide acetan, a water-soluble polysaccharide involved in production of bacterial cellulose (BC). The chain is GDP-mannose:cellobiosyl-diphosphopolyprenol alpha-mannosyltransferase (aceC) from Komagataeibacter xylinus (Gluconacetobacter xylinus).